Consider the following 601-residue polypeptide: 3-hydroxy-3-methylglutaryl-coenzyme A reductase (601 aa).

The disordered stretch occupies residues 1–34 (MDSRRRSPTVTAKAAAGELPLAPHEGQNQQPSIP). The next 2 membrane-spanning stretches (helical) occupy residues 36–58 (SSDV…FFSV) and 86–106 (ALAS…LDFV). A linker region spans residues 107 to 179 (QSLIYKPNNE…PLITPQNSEE (73 aa)). The catalytic stretch occupies residues 180–601 (DEDIIKAVVA…IASSQLESDS (422 aa)). Glu-273 (charge relay system) is an active-site residue. The N-linked (GlcNAc...) asparagine glycan is linked to Asn-337. Catalysis depends on charge relay system residues Lys-405 and Asp-481. The Proton donor role is filled by His-579. The N-linked (GlcNAc...) asparagine glycan is linked to Asn-583.

Belongs to the HMG-CoA reductase family.

Its subcellular location is the endoplasmic reticulum membrane. It catalyses the reaction (R)-mevalonate + 2 NADP(+) + CoA = (3S)-3-hydroxy-3-methylglutaryl-CoA + 2 NADPH + 2 H(+). Its pathway is metabolic intermediate biosynthesis; (R)-mevalonate biosynthesis; (R)-mevalonate from acetyl-CoA: step 3/3. In terms of biological role, catalyzes the synthesis of mevalonate. The specific precursor of all isoprenoid compounds present in plants. The chain is 3-hydroxy-3-methylglutaryl-coenzyme A reductase (HMGR) from Catharanthus roseus (Madagascar periwinkle).